The primary structure comprises 495 residues: UDP-glycosyltransferase 73C9 (495 aa).

A UDP-alpha-D-glucose-binding site is contributed by 23–26; sequence GHMI. The Proton acceptor role is filled by H24. Catalysis depends on D129, which acts as the Charge relay. UDP-alpha-D-glucose is bound by residues 355 to 358, 373 to 381, and 397 to 398; these read WSPQ, HCGWNSTLE, and DQ.

It belongs to the UDP-glycosyltransferase family.

Possesses very weak glucosyltransferase activity toward 2,4,5-trichlorophenol (TCP), when assayed with high concentrations of TCP. The protein is UDP-glycosyltransferase 73C9 of Barbarea vulgaris (Yellow rocket).